A 700-amino-acid chain; its full sequence is Elongation factor G 2 (700 aa).

The 283-residue stretch at 8 to 290 (ERYRNIGISA…AVIDFLPSPV (283 aa)) folds into the tr-type G domain. GTP contacts are provided by residues 17–24 (AHIDAGKT), 88–92 (DTPGH), and 142–145 (NKMD).

The protein belongs to the TRAFAC class translation factor GTPase superfamily. Classic translation factor GTPase family. EF-G/EF-2 subfamily.

It is found in the cytoplasm. In terms of biological role, catalyzes the GTP-dependent ribosomal translocation step during translation elongation. During this step, the ribosome changes from the pre-translocational (PRE) to the post-translocational (POST) state as the newly formed A-site-bound peptidyl-tRNA and P-site-bound deacylated tRNA move to the P and E sites, respectively. Catalyzes the coordinated movement of the two tRNA molecules, the mRNA and conformational changes in the ribosome. This Burkholderia mallei (strain ATCC 23344) protein is Elongation factor G 2.